We begin with the raw amino-acid sequence, 689 residues long: Quinidine resistance protein 3 (689 aa).

Polar residues predominate over residues 1 to 24 (MQAQGSQSNVGSLRSNCSDNSLPN). The tract at residues 1 to 73 (MQAQGSQSNV…DNQLSRLKSE (73 aa)) is disordered. Topologically, residues 1–108 (MQAQGSQSNV…RDYPPMMKKM (108 aa)) are extracellular. Composition is skewed to basic and acidic residues over residues 29–51 (MHCD…EKTN) and 59–73 (SREH…LKSE). Residues 109–131 (IVFLIAFSSMMGPMGTSIIFPAI) traverse the membrane as a helical segment. The Cytoplasmic segment spans residues 132-139 (NSITTEFK). A helical transmembrane segment spans residues 140 to 163 (TSVIMVNVSIGVYLLSLGVFPLWW). Over 164 to 175 (SSLSELEGRRTT) the chain is Extracellular. A helical transmembrane segment spans residues 176–193 (YITSFALLFAFNIGSALA). Over 194–235 (PDINSFIALRMLCGAASASVQSVGAGTVADLYISEDRGKNLS) the chain is Cytoplasmic. Residues 236 to 256 (YYYLGPLLAPLLSPIFGSLLV) traverse the membrane as a helical segment. The Extracellular segment spans residues 257–265 (NRWPWRSTQ). Residues 266–283 (WFMVILSGCNVILLTVLL) form a helical membrane-spanning segment. Over 284-475 (PETLRKQDSK…KSLHFLEYPP (192 aa)) the chain is Cytoplasmic. Ser-436 bears the Phosphoserine mark. A helical membrane pass occupies residues 476-493 (VALAITFSAISFSTVYFV). The Extracellular segment spans residues 494-510 (NMTVEYKYSRPPYNFKP). The helical transmembrane segment at 511–532 (LYIGLLYIPNSVTYFFASIYGG) threads the bilayer. Topologically, residues 533–558 (RWVDMLLKRYKEKYGILAPEARISWN) are cytoplasmic. Residues 559–577 (VVTSVISFPIALLIFGWCL) form a helical membrane-spanning segment. Residues 578–586 (DKKCHWVTP) are Extracellular-facing. The helical transmembrane segment at 587–609 (LIGTALFGYAAMMTIGATLSYLV) threads the bilayer. Residues 610 to 624 (DSLPGKGATGVALNN) lie on the Cytoplasmic side of the membrane. The chain crosses the membrane as a helical span at residues 625 to 642 (LIRQILAATAVFVTTPML). Over 643-648 (NGMGTG) the chain is Extracellular. The chain crosses the membrane as a helical span at residues 649-668 (WAFTMLAFIVLGASSVLIIL). Residues 669 to 689 (KKHGDYWRENYDLQKLYDKID) are Cytoplasmic-facing.

Belongs to the major facilitator superfamily. CAR1 family.

It localises to the cell membrane. Multidrug resistance transporter involved in resistance and adaptation to quinidine and to the herbicide barban (4-chloro-2-butynyl [3-chlorophenyl] carbamate). This is Quinidine resistance protein 3 (QDR3) from Saccharomyces cerevisiae (strain ATCC 204508 / S288c) (Baker's yeast).